The following is a 359-amino-acid chain: 3-dehydroquinate synthase (359 aa).

The protein belongs to the archaeal-type DHQ synthase family.

The enzyme catalyses 2-amino-2,3,7-trideoxy-D-lyxo-hept-6-ulosonate + NAD(+) + H2O = 3-dehydroquinate + NH4(+) + NADH + H(+). In terms of biological role, catalyzes the oxidative deamination and cyclization of 2-amino-3,7-dideoxy-D-threo-hept-6-ulosonic acid (ADH) to yield 3-dehydroquinate (DHQ), which is fed into the canonical shikimic pathway of aromatic amino acid biosynthesis. The sequence is that of 3-dehydroquinate synthase from Methanosphaera stadtmanae (strain ATCC 43021 / DSM 3091 / JCM 11832 / MCB-3).